Consider the following 202-residue polypeptide: IMP cyclohydrolase (202 aa).

The protein belongs to the archaeal IMP cyclohydrolase family.

The catalysed reaction is IMP + H2O = 5-formamido-1-(5-phospho-D-ribosyl)imidazole-4-carboxamide. It functions in the pathway purine metabolism; IMP biosynthesis via de novo pathway; IMP from 5-formamido-1-(5-phospho-D-ribosyl)imidazole-4-carboxamide: step 1/1. Catalyzes the cyclization of 5-formylamidoimidazole-4-carboxamide ribonucleotide to IMP. The polypeptide is IMP cyclohydrolase (Methanothermobacter thermautotrophicus (strain ATCC 29096 / DSM 1053 / JCM 10044 / NBRC 100330 / Delta H) (Methanobacterium thermoautotrophicum)).